The primary structure comprises 270 residues: Maximins-S type D (270 aa).

The N-terminal stretch at 1-18 is a signal peptide; that stretch reads MNFNYFILVLFFITSGHA. 2 propeptides span residues 19–35 and 52–65; these read KSETREVHQEAENHIKR and SAEEQNLAEHLVTR. Asparagine 83 is subject to Asparagine amide. Residues 87-100 constitute a propeptide that is removed on maturation; that stretch reads SAEEQDLAEDLVTR. Lysine 118 bears the Lysine amide mark. Positions 122–135 are excised as a propeptide; sequence SAEDQDLAEDLVTR. Asparagine 153 is subject to Asparagine amide. The propeptide occupies 157 to 170; it reads SAEEQDLAEHLVTR. The residue at position 188 (asparagine 188) is an Asparagine amide. A propeptide spanning residues 192 to 205 is cleaved from the precursor; it reads SAEEQDLVEDLVTR. Lysine 223 is modified (lysine amide). A propeptide spanning residues 227-240 is cleaved from the precursor; it reads SAEEQDLAEDLVTR. Lysine 258 carries the post-translational modification Lysine amide. Positions 262-270 are excised as a propeptide; the sequence is SAEQEKDMK.

The protein belongs to the maximin-S family. As to expression, expressed by the skin dorsal glands.

The protein localises to the secreted. Maximin-S1 has no antimicrobial activity. Has no hemolytic activity. Its function is as follows. Maximin-S2 has an activity against mycoplasma but has no activity against common Gram-positive and Gram-negative bacteria nor fungi. Has no hemolytic activity. Functionally, maximin-S3 has an activity against mycoplasma but has no activity against common Gram-positive and Gram-negative bacteria nor fungi. Has no hemolytic activity. In terms of biological role, maximin-S4 has an activity against mycoplasma but has no activity against common Gram-positive and Gram-negative bacteria nor fungi. Has no hemolytic activity. Maximin-S5 has an activity against mycoplasma but has no activity against common Gram-positive and Gram-negative bacteria nor fungi. Has no hemolytic activity. The polypeptide is Maximins-S type D (Bombina maxima (Giant fire-bellied toad)).